A 352-amino-acid chain; its full sequence is S-adenosylmethionine:tRNA ribosyltransferase-isomerase (352 aa).

This sequence belongs to the QueA family. Monomer.

It localises to the cytoplasm. It carries out the reaction 7-aminomethyl-7-carbaguanosine(34) in tRNA + S-adenosyl-L-methionine = epoxyqueuosine(34) in tRNA + adenine + L-methionine + 2 H(+). Its pathway is tRNA modification; tRNA-queuosine biosynthesis. In terms of biological role, transfers and isomerizes the ribose moiety from AdoMet to the 7-aminomethyl group of 7-deazaguanine (preQ1-tRNA) to give epoxyqueuosine (oQ-tRNA). This is S-adenosylmethionine:tRNA ribosyltransferase-isomerase from Bacteroides fragilis (strain ATCC 25285 / DSM 2151 / CCUG 4856 / JCM 11019 / LMG 10263 / NCTC 9343 / Onslow / VPI 2553 / EN-2).